The chain runs to 342 residues: Phosphoribosylformylglycinamidine cyclo-ligase (342 aa).

Belongs to the AIR synthase family.

The protein localises to the cytoplasm. The enzyme catalyses 2-formamido-N(1)-(5-O-phospho-beta-D-ribosyl)acetamidine + ATP = 5-amino-1-(5-phospho-beta-D-ribosyl)imidazole + ADP + phosphate + H(+). The protein operates within purine metabolism; IMP biosynthesis via de novo pathway; 5-amino-1-(5-phospho-D-ribosyl)imidazole from N(2)-formyl-N(1)-(5-phospho-D-ribosyl)glycinamide: step 2/2. This chain is Phosphoribosylformylglycinamidine cyclo-ligase, found in Staphylococcus aureus (strain bovine RF122 / ET3-1).